A 539-amino-acid polypeptide reads, in one-letter code: G protein-coupled receptor associated sorting protein 3 (539 aa).

The segment covering Met-1–Ala-10 has biased composition (basic residues). 2 disordered regions span residues Met-1–Trp-112 and Val-134–Val-172. Basic and acidic residues-rich tracts occupy residues Val-66 to Ala-80 and Phe-88 to Ser-106. Residues Val-134–Gln-146 show a composition bias toward polar residues.

This sequence belongs to the GPRASP family. Homodimer.

The protein resides in the cytoplasm. Its subcellular location is the nucleus. Survival and differentiation promoting protein that plays a role in the regulation of neurosynaptogenesis. Induces phosphatase PP2A activity which results in APP dephosphorylation and inhibits BACE1-mediated processing of APP. The chain is G protein-coupled receptor associated sorting protein 3 (Gprasp3) from Mus musculus (Mouse).